Consider the following 2042-residue polypeptide: Cell adhesion molecule DSCAML1 (2042 aa).

Positions Met1–Thr17 are cleaved as a signal peptide. Topologically, residues Glu18–Lys1592 are extracellular. 2 N-linked (GlcNAc...) asparagine glycosylation sites follow: Asn28 and Asn78. 9 consecutive Ig-like C2-type domains span residues Ser37–Ser107, Pro114–Ser216, Pro227–Thr311, Pro315–Thr403, Pro409–Asn502, Pro507–Ser587, Pro597–Ile686, Pro691–Thr785, and Pro789–Gln886. 5 disulfide bridges follow: Cys46–Cys102, Cys145–Cys197, Cys248–Cys295, Cys337–Cys387, and Cys430–Cys486. Residues Asn369, Asn472, Asn514, Asn557, Asn667, Asn711, Asn750, Asn797, and Asn810 are each glycosylated (N-linked (GlcNAc...) asparagine). 2 disulfides stabilise this stretch: Cys527–Cys576 and Cys618–Cys670. Cysteines 712 and 768 form a disulfide. A disulfide bridge links Cys811 with Cys868. 4 Fibronectin type-III domains span residues Pro888–Ala985, Pro990–Asp1089, Pro1094–Asp1190, and Pro1194–Ala1289. 6 N-linked (GlcNAc...) asparagine glycosylation sites follow: Asn927, Asn1083, Asn1145, Asn1163, Asn1276, and Asn1346. In terms of domain architecture, Ig-like C2-type 10 spans Glu1279–Asn1368. Cys1312 and Cys1364 are joined by a disulfide. 2 consecutive Fibronectin type-III domains span residues Pro1384 to Arg1478 and Glu1479 to Pro1579. Asn1493, Asn1532, and Asn1562 each carry an N-linked (GlcNAc...) asparagine glycan. Residues Leu1593–Ile1613 traverse the membrane as a helical segment. At Arg1614–Val2042 the chain is on the cytoplasmic side. Disordered regions lie at residues Pro1716–Arg1742, Ser1781–Ala1805, Ser1841–Pro1865, and Pro1940–Val2042. A compositionally biased stretch (basic residues) spans Lys1733–Arg1742. Polar residues-rich tracts occupy residues Ser1781–Gln1790 and Ser1841–Ser1863. Residues Ala1951–Ser1960 show a composition bias toward pro residues. The segment covering Ser1961 to Pro1983 has biased composition (low complexity). Pro residues predominate over residues Ala1984 to Pro1995. Composition is skewed to low complexity over residues Pro1996–Thr2005 and Gly2023–Ala2034.

As to quaternary structure, homodimer; mediates homophilic interactions to promote cell adhesion. As to expression, SDK1, SDK2, DSCAM and DSCAML1 are expressed in non-overlapping subsets of interneurons and retinal ganglion cells (RGCs) that form synapses in distinct inner plexiform layer (IPL) sublaminae.

Its subcellular location is the cell membrane. It localises to the synapse. In terms of biological role, cell adhesion molecule that plays a role in neuronal self-avoidance. Promotes repulsion between specific neuronal processes of either the same cell or the same subtype of cells. Adhesion molecule that promotes lamina-specific synaptic connections in the retina: expressed in specific subsets of interneurons and retinal ganglion cells (RGCs) and promotes synaptic connectivity via homophilic interactions. In Gallus gallus (Chicken), this protein is Cell adhesion molecule DSCAML1 (DSCAML1).